The primary structure comprises 357 residues: Tetraacyldisaccharide 4'-kinase (357 aa).

67–74 (SVGGTGKT) contacts ATP.

It belongs to the LpxK family.

It catalyses the reaction a lipid A disaccharide + ATP = a lipid IVA + ADP + H(+). It functions in the pathway glycolipid biosynthesis; lipid IV(A) biosynthesis; lipid IV(A) from (3R)-3-hydroxytetradecanoyl-[acyl-carrier-protein] and UDP-N-acetyl-alpha-D-glucosamine: step 6/6. Transfers the gamma-phosphate of ATP to the 4'-position of a tetraacyldisaccharide 1-phosphate intermediate (termed DS-1-P) to form tetraacyldisaccharide 1,4'-bis-phosphate (lipid IVA). The protein is Tetraacyldisaccharide 4'-kinase of Syntrophotalea carbinolica (strain DSM 2380 / NBRC 103641 / GraBd1) (Pelobacter carbinolicus).